A 601-amino-acid chain; its full sequence is A-type ATP synthase subunit A (601 aa).

G236–T243 contacts ATP.

Belongs to the ATPase alpha/beta chains family. As to quaternary structure, has multiple subunits with at least A(3), B(3), C, D, E, F, H, I and proteolipid K(x).

The protein localises to the cell membrane. It catalyses the reaction ATP + H2O + 4 H(+)(in) = ADP + phosphate + 5 H(+)(out). In terms of biological role, component of the A-type ATP synthase that produces ATP from ADP in the presence of a proton gradient across the membrane. The A chain is the catalytic subunit. The chain is A-type ATP synthase subunit A from Hyperthermus butylicus (strain DSM 5456 / JCM 9403 / PLM1-5).